The following is a 198-amino-acid chain: Leucyl/phenylalanyl-tRNA--protein transferase (198 aa).

This sequence belongs to the L/F-transferase family.

It is found in the cytoplasm. The enzyme catalyses N-terminal L-lysyl-[protein] + L-leucyl-tRNA(Leu) = N-terminal L-leucyl-L-lysyl-[protein] + tRNA(Leu) + H(+). It catalyses the reaction N-terminal L-arginyl-[protein] + L-leucyl-tRNA(Leu) = N-terminal L-leucyl-L-arginyl-[protein] + tRNA(Leu) + H(+). The catalysed reaction is L-phenylalanyl-tRNA(Phe) + an N-terminal L-alpha-aminoacyl-[protein] = an N-terminal L-phenylalanyl-L-alpha-aminoacyl-[protein] + tRNA(Phe). In terms of biological role, functions in the N-end rule pathway of protein degradation where it conjugates Leu, Phe and, less efficiently, Met from aminoacyl-tRNAs to the N-termini of proteins containing an N-terminal arginine or lysine. In Synechocystis sp. (strain ATCC 27184 / PCC 6803 / Kazusa), this protein is Leucyl/phenylalanyl-tRNA--protein transferase.